Consider the following 300-residue polypeptide: Bifunctional protein FolD 1 (300 aa).

Residues 166-168, serine 191, and isoleucine 232 contribute to the NADP(+) site; that span reads GRS.

It belongs to the tetrahydrofolate dehydrogenase/cyclohydrolase family. As to quaternary structure, homodimer.

The enzyme catalyses (6R)-5,10-methylene-5,6,7,8-tetrahydrofolate + NADP(+) = (6R)-5,10-methenyltetrahydrofolate + NADPH. The catalysed reaction is (6R)-5,10-methenyltetrahydrofolate + H2O = (6R)-10-formyltetrahydrofolate + H(+). It participates in one-carbon metabolism; tetrahydrofolate interconversion. Catalyzes the oxidation of 5,10-methylenetetrahydrofolate to 5,10-methenyltetrahydrofolate and then the hydrolysis of 5,10-methenyltetrahydrofolate to 10-formyltetrahydrofolate. The sequence is that of Bifunctional protein FolD 1 from Roseobacter denitrificans (strain ATCC 33942 / OCh 114) (Erythrobacter sp. (strain OCh 114)).